The primary structure comprises 87 residues: Small ribosomal subunit protein uS15 (87 aa).

The span at 1 to 19 shows a compositional bias: basic and acidic residues; sequence MEKARKEQLIREYATHEGD. Residues 1 to 22 are disordered; sequence MEKARKEQLIREYATHEGDTGS.

Belongs to the universal ribosomal protein uS15 family. As to quaternary structure, part of the 30S ribosomal subunit. Forms a bridge to the 50S subunit in the 70S ribosome, contacting the 23S rRNA.

Functionally, one of the primary rRNA binding proteins, it binds directly to 16S rRNA where it helps nucleate assembly of the platform of the 30S subunit by binding and bridging several RNA helices of the 16S rRNA. Its function is as follows. Forms an intersubunit bridge (bridge B4) with the 23S rRNA of the 50S subunit in the ribosome. In Clostridium novyi (strain NT), this protein is Small ribosomal subunit protein uS15.